Here is a 234-residue protein sequence, read N- to C-terminus: Triosephosphate isomerase (234 aa).

A substrate-binding site is contributed by 8-10 (NFK). The Electrophile role is filled by H90. Residue E159 is the Proton acceptor of the active site. Residues G165 and S197 each coordinate substrate.

This sequence belongs to the triosephosphate isomerase family. In terms of assembly, homodimer.

It is found in the cytoplasm. It catalyses the reaction D-glyceraldehyde 3-phosphate = dihydroxyacetone phosphate. It participates in carbohydrate biosynthesis; gluconeogenesis. The protein operates within carbohydrate degradation; glycolysis; D-glyceraldehyde 3-phosphate from glycerone phosphate: step 1/1. In terms of biological role, involved in the gluconeogenesis. Catalyzes stereospecifically the conversion of dihydroxyacetone phosphate (DHAP) to D-glyceraldehyde-3-phosphate (G3P). This Helicobacter pylori (strain G27) protein is Triosephosphate isomerase.